Consider the following 267-residue polypeptide: Ribosomal RNA small subunit methyltransferase A (267 aa).

S-adenosyl-L-methionine is bound by residues asparagine 13, leucine 15, glycine 39, glutamate 59, aspartate 87, and asparagine 106.

This sequence belongs to the class I-like SAM-binding methyltransferase superfamily. rRNA adenine N(6)-methyltransferase family. RsmA subfamily.

The protein localises to the cytoplasm. It carries out the reaction adenosine(1518)/adenosine(1519) in 16S rRNA + 4 S-adenosyl-L-methionine = N(6)-dimethyladenosine(1518)/N(6)-dimethyladenosine(1519) in 16S rRNA + 4 S-adenosyl-L-homocysteine + 4 H(+). Specifically dimethylates two adjacent adenosines (A1518 and A1519) in the loop of a conserved hairpin near the 3'-end of 16S rRNA in the 30S particle. May play a critical role in biogenesis of 30S subunits. This is Ribosomal RNA small subunit methyltransferase A from Sulfurimonas denitrificans (strain ATCC 33889 / DSM 1251) (Thiomicrospira denitrificans (strain ATCC 33889 / DSM 1251)).